We begin with the raw amino-acid sequence, 89 residues long: Acyl-CoA-binding protein (89 aa).

An ACB domain is found at 3–88 (LKEEFEEHAE…VKQLFEAAGS (86 aa)). An acyl-CoA is bound by residues 30 to 34 (YGLYK), lysine 56, and tyrosine 75.

It belongs to the ACBP family.

Functionally, binds medium- and long-chain acyl-CoA esters with very high affinity and may function as an intracellular carrier of acyl-CoA esters. The protein is Acyl-CoA-binding protein of Gossypium hirsutum (Upland cotton).